Reading from the N-terminus, the 166-residue chain is 2-C-methyl-D-erythritol 2,4-cyclodiphosphate synthase (166 aa).

2 residues coordinate a divalent metal cation: aspartate 11 and histidine 13. 4-CDP-2-C-methyl-D-erythritol 2-phosphate-binding positions include 11–13 (DVH) and 40–41 (HS). Histidine 48 lines the a divalent metal cation pocket. Residues 62-64 (DLG), 135-138 (TTSD), phenylalanine 142, and arginine 145 each bind 4-CDP-2-C-methyl-D-erythritol 2-phosphate.

Belongs to the IspF family. Homotrimer. A divalent metal cation is required as a cofactor.

The catalysed reaction is 4-CDP-2-C-methyl-D-erythritol 2-phosphate = 2-C-methyl-D-erythritol 2,4-cyclic diphosphate + CMP. It functions in the pathway isoprenoid biosynthesis; isopentenyl diphosphate biosynthesis via DXP pathway; isopentenyl diphosphate from 1-deoxy-D-xylulose 5-phosphate: step 4/6. Involved in the biosynthesis of isopentenyl diphosphate (IPP) and dimethylallyl diphosphate (DMAPP), two major building blocks of isoprenoid compounds. Catalyzes the conversion of 4-diphosphocytidyl-2-C-methyl-D-erythritol 2-phosphate (CDP-ME2P) to 2-C-methyl-D-erythritol 2,4-cyclodiphosphate (ME-CPP) with a corresponding release of cytidine 5-monophosphate (CMP). The sequence is that of 2-C-methyl-D-erythritol 2,4-cyclodiphosphate synthase from Pseudarthrobacter chlorophenolicus (strain ATCC 700700 / DSM 12829 / CIP 107037 / JCM 12360 / KCTC 9906 / NCIMB 13794 / A6) (Arthrobacter chlorophenolicus).